We begin with the raw amino-acid sequence, 94 residues long: UPF0337 protein NE2439 (94 aa).

Positions K74–T94 are disordered. Basic residues predominate over residues K85 to T94.

Belongs to the UPF0337 (CsbD) family.

This Nitrosomonas europaea (strain ATCC 19718 / CIP 103999 / KCTC 2705 / NBRC 14298) protein is UPF0337 protein NE2439.